Reading from the N-terminus, the 241-residue chain is Uridylate kinase (241 aa).

Position 15-18 (K15–G18) interacts with ATP. G57 lines the UMP pocket. Positions 58 and 62 each coordinate ATP. UMP is bound by residues D77 and T138 to T145. ATP is bound by residues T165, Y171, and D174.

Belongs to the UMP kinase family. In terms of assembly, homohexamer.

Its subcellular location is the cytoplasm. The catalysed reaction is UMP + ATP = UDP + ADP. It functions in the pathway pyrimidine metabolism; CTP biosynthesis via de novo pathway; UDP from UMP (UMPK route): step 1/1. Inhibited by UTP. Its function is as follows. Catalyzes the reversible phosphorylation of UMP to UDP. This Dichelobacter nodosus (strain VCS1703A) protein is Uridylate kinase.